The following is a 285-amino-acid chain: MANLRIIKRRIRSVRNIAKITRAMEMIAASKMKKAQERGLAGRPYSEKITEVIAALAALPQSGEILHPLLERRPVKKIAILHITPDRGQCGGLVANINRKTGTFIMEQKVPVSAVVVGRKGVDFIRRIRQQMRAEFINLGDKPDYLDTLPISRVIMDDFMSGEIDQVFIAYTQFVSTAIQNPVLEQLLPVMPVELPPGQNLEYIYEPESATVLNSLLPRFVEMSVYHAILESIASEQSARMVAMRNATDNAKELIGELTLVYNKARQESITNELLDIVGGAAALA.

This sequence belongs to the ATPase gamma chain family. As to quaternary structure, F-type ATPases have 2 components, CF(1) - the catalytic core - and CF(0) - the membrane proton channel. CF(1) has five subunits: alpha(3), beta(3), gamma(1), delta(1), epsilon(1). CF(0) has three main subunits: a, b and c.

Its subcellular location is the cell membrane. Produces ATP from ADP in the presence of a proton gradient across the membrane. The gamma chain is believed to be important in regulating ATPase activity and the flow of protons through the CF(0) complex. This is ATP synthase gamma chain from Dehalococcoides mccartyi (strain CBDB1).